A 485-amino-acid polypeptide reads, in one-letter code: Glutamate--tRNA ligase (485 aa).

The 'HIGH' region signature appears at 11–21; sequence PSPTGHLHIGN. The short motif at 252–256 is the 'KMSKS' region element; that stretch reads KLSKR. Residue K255 participates in ATP binding.

Belongs to the class-I aminoacyl-tRNA synthetase family. Glutamate--tRNA ligase type 1 subfamily. As to quaternary structure, monomer.

The protein localises to the cytoplasm. It carries out the reaction tRNA(Glu) + L-glutamate + ATP = L-glutamyl-tRNA(Glu) + AMP + diphosphate. Its function is as follows. Catalyzes the attachment of glutamate to tRNA(Glu) in a two-step reaction: glutamate is first activated by ATP to form Glu-AMP and then transferred to the acceptor end of tRNA(Glu). The polypeptide is Glutamate--tRNA ligase (Bacillus thuringiensis (strain Al Hakam)).